We begin with the raw amino-acid sequence, 598 residues long: Arginine--tRNA ligase (598 aa).

The 'HIGH' region signature appears at 139–149; that stretch reads ANPTGPMHVGH.

Belongs to the class-I aminoacyl-tRNA synthetase family. Monomer.

The protein resides in the cytoplasm. It carries out the reaction tRNA(Arg) + L-arginine + ATP = L-arginyl-tRNA(Arg) + AMP + diphosphate. This Bradyrhizobium sp. (strain ORS 278) protein is Arginine--tRNA ligase.